The following is a 391-amino-acid chain: Tryptophan synthase beta chain (391 aa).

K84 carries the post-translational modification N6-(pyridoxal phosphate)lysine.

It belongs to the TrpB family. In terms of assembly, tetramer of two alpha and two beta chains. Pyridoxal 5'-phosphate serves as cofactor.

The catalysed reaction is (1S,2R)-1-C-(indol-3-yl)glycerol 3-phosphate + L-serine = D-glyceraldehyde 3-phosphate + L-tryptophan + H2O. It participates in amino-acid biosynthesis; L-tryptophan biosynthesis; L-tryptophan from chorismate: step 5/5. Its function is as follows. The beta subunit is responsible for the synthesis of L-tryptophan from indole and L-serine. In Caldanaerobacter subterraneus subsp. tengcongensis (strain DSM 15242 / JCM 11007 / NBRC 100824 / MB4) (Thermoanaerobacter tengcongensis), this protein is Tryptophan synthase beta chain.